Consider the following 586-residue polypeptide: Old nuclease (586 aa).

Positions 1–163 (MTVRLASVSI…VEDSTKCKNT (163 aa)) are ATPase domain N-terminus. 34-38 (NAGKS) serves as a coordination point for ATP. The segment at 164 to 270 (TTIGKILSAI…SRFGHGTQRS (107 aa)) is dimerization domain. The interval 271–390 (IQMALIQYLA…TLSNSSYLLF (120 aa)) is ATPase domain C-terminus. Residues 393-586 (EVLLVEGKTE…DEMEDFIKWI (194 aa)) are toprim domain. A divalent metal cation-binding residues include E398, E402, D453, D455, D541, and E543. R570 serves as the catalytic Stabilizes transition state or protonates leaving group.

The protein belongs to the class 1 OLD nuclease family. Mg(2+) is required as a cofactor.

The enzyme catalyses Exonucleolytic cleavage in the 5'- to 3'-direction to yield nucleoside 5'-phosphates.. Functionally, an exonuclease that acts preferentially on linear dsDNA, processively degrading it from 5'-3', releasing 5'-phosphomononucleotides. Initiates on 5'-phosphate and 5'-hydroxyl ends. Also acts on linear ssDNA, nicked DNA and RNA. ATP enhances but is not necessary for exonuclease activity; has ATPase activity that is not stimulated by DNA. The old protein kills E.coli recB and recC mutants and interferes with phage lambda growth. Both the exonuclease and ATPase activities are required in vivo. Probably interferes with lambda phage by degrading its linear DNA. Isolated as a mutant able to lysogenize E.coli strain C cells normally not susceptible to lysis by phage P2. This is Old nuclease from Enterobacteriaceae (Bacteriophage P2).